A 94-amino-acid polypeptide reads, in one-letter code: MARVTVEDAVKQVGNRFDLVLVAARRARQLAVQGKEPLVDEENDKPTVIALREIEEGLISNQFMDAQERIEQQQQEASELAAVAALTQDRDYGF.

The protein belongs to the RNA polymerase subunit omega family. In terms of assembly, the RNAP catalytic core consists of 2 alpha, 1 beta, 1 beta' and 1 omega subunit. When a sigma factor is associated with the core the holoenzyme is formed, which can initiate transcription.

The enzyme catalyses RNA(n) + a ribonucleoside 5'-triphosphate = RNA(n+1) + diphosphate. In terms of biological role, promotes RNA polymerase assembly. Latches the N- and C-terminal regions of the beta' subunit thereby facilitating its interaction with the beta and alpha subunits. This Tolumonas auensis (strain DSM 9187 / NBRC 110442 / TA 4) protein is DNA-directed RNA polymerase subunit omega.